Reading from the N-terminus, the 160-residue chain is UPF0262 protein BSUIS_A0274 (160 aa).

The protein belongs to the UPF0262 family.

The polypeptide is UPF0262 protein BSUIS_A0274 (Brucella suis (strain ATCC 23445 / NCTC 10510)).